The primary structure comprises 463 residues: Cysteine--tRNA ligase (463 aa).

Cys29 contributes to the Zn(2+) binding site. The 'HIGH' region motif lies at 31–41 (MTIYDLCHIGH). Zn(2+) contacts are provided by Cys218, His243, and Glu247. Positions 275–279 (KMSKS) match the 'KMSKS' region motif. Lys278 contacts ATP.

It belongs to the class-I aminoacyl-tRNA synthetase family. In terms of assembly, monomer. Zn(2+) serves as cofactor.

The protein resides in the cytoplasm. It catalyses the reaction tRNA(Cys) + L-cysteine + ATP = L-cysteinyl-tRNA(Cys) + AMP + diphosphate. This Polaromonas naphthalenivorans (strain CJ2) protein is Cysteine--tRNA ligase.